The primary structure comprises 798 residues: MKFTLDWLKSHLDTDATLEQIEVGLTAIGLEVEGIDDPSKHLGGFVVGHILEAEKHPDADKLKLCKVDSGAGILQVVCGAPNARAGLKVILAQPGTYIPITGDVLKKGKVRGVESQGMMCSWRELKLGEDHDGIAELDVTLAVGASLLDIMSFDPMIEISVTPNRVDCLGVRGIARDLAAFGLGNLKPLKVEPVPGAFKSSIGVRLEFAPEDSNACPLFAGRLIRGVKNGDSPQWLKDRLTAIGLRPISALVDITNFFAYDLCRPLHVFDAAKVKGDIRARLARDGETLAGLNGKTYTLESGMTVIADENGPEALAGILGGEHSGCTEATTEVFLEAAYFDPIRTAATGRKLDILSDARFRFERGVDPAFVVPSMELATRMILDLCGGEASEAVIAGTEPDWQKSIVLRPNRVAELGGVEVSTQRMETILNDLGCAVAEHADGLLVNPPSWRGDITAEHDLVEEVIRINGYDNIPATPMPRPAMPKPVLTPGQRRSGWVRRQLATRGLVETVTWSFLPEAQAVMFGGGAPEMHLANPISSDLDVMRPSVLPNLVTAAGRNADRGMKDLGLFELGPQFDGPEPGQQRLVAAGIRAGRARGRHWADPARAVDAFDAKADILSAVAAAGANPDSLQVVAEAPVWYHPGRSGTLKLGNKPVGFFGEIHPGLLAKLDVKGPVAGFELFLEALPAQKAKATKAKPLLKASALQPLDRDFAFTLDTGVAADAVVRAARNADKVLISDVAVFDLYEGDKMAAGKKSLAITVTLQPTDKTLTDEDIEAVGAKIVAAVAKATGGELRG.

Residues 39–148 (SKHLGGFVVG…VTLAVGASLL (110 aa)) enclose the tRNA-binding domain. The B5 domain occupies 401–476 (DWQKSIVLRP…RINGYDNIPA (76 aa)). Residues Asp454, Asp460, Glu463, and Glu464 each contribute to the Mg(2+) site. The FDX-ACB domain occupies 704 to 797 (SALQPLDRDF…VAKATGGELR (94 aa)).

This sequence belongs to the phenylalanyl-tRNA synthetase beta subunit family. Type 1 subfamily. Tetramer of two alpha and two beta subunits. Mg(2+) serves as cofactor.

It localises to the cytoplasm. It catalyses the reaction tRNA(Phe) + L-phenylalanine + ATP = L-phenylalanyl-tRNA(Phe) + AMP + diphosphate + H(+). This Paramagnetospirillum magneticum (strain ATCC 700264 / AMB-1) (Magnetospirillum magneticum) protein is Phenylalanine--tRNA ligase beta subunit.